A 162-amino-acid polypeptide reads, in one-letter code: MAQDAITAVINSADVQGKYLDTAALEKLKAYFSTGELRVRAATTISANAAAIVKEAVAKSLLYSDITRPGGNMYTTRRYAACIRDLDYYLRYATYAMLAGDPSILDERVLNGLKETYNSLGVPVGATVQAIQAIKEVTASLVGADAGKEMGIYLDYISSGLS.

N72 carries the post-translational modification N4-methylasparagine. C82 contacts (2R,3E)-phycocyanobilin.

Belongs to the phycobiliprotein family. Heterohexamer of two alpha chains, one alpha-B chain and three beta chains. Post-translationally, contains one covalently linked phycocyanobilin chromophore. The chromophore is added by phycocyanobilin lyase CpcS 1.

Its subcellular location is the cellular thylakoid membrane. Light-harvesting photosynthetic bile pigment-protein from the phycobiliprotein complex. Allophycocyanin has a maximum absorption at approximately 650 to 653 nanometers. The chain is Allophycocyanin subunit beta (apcB) from Nostoc sp. (strain PCC 7120 / SAG 25.82 / UTEX 2576).